A 218-amino-acid chain; its full sequence is Adenylate kinase (218 aa).

10–15 provides a ligand contact to ATP; that stretch reads GAGKGT. The interval 30–59 is NMP; that stretch reads STGDMLRAAVKAGSPLGLKVKDIMTSGGLV. Residues T31, R36, 57-59, 85-88, and Q92 contribute to the AMP site; these read GLV and GFPR. The segment at 122–159 is LID; that stretch reads GRRVHEASGRVYHVKHNAPKTEGVDDETGEPLVQRDDD. ATP contacts are provided by residues R123 and 132–133; that span reads VY. 2 residues coordinate AMP: R156 and R167. Position 203 (G203) interacts with ATP.

This sequence belongs to the adenylate kinase family. Monomer.

It localises to the cytoplasm. The catalysed reaction is AMP + ATP = 2 ADP. Its pathway is purine metabolism; AMP biosynthesis via salvage pathway; AMP from ADP: step 1/1. Functionally, catalyzes the reversible transfer of the terminal phosphate group between ATP and AMP. Plays an important role in cellular energy homeostasis and in adenine nucleotide metabolism. This Saccharophagus degradans (strain 2-40 / ATCC 43961 / DSM 17024) protein is Adenylate kinase.